The following is a 238-amino-acid chain: Expansin-like protein 5 (238 aa).

The N-terminal stretch at 1 to 21 (MRINFKLILIILTSFYGIINC) is a signal peptide. The Expansin-like EG45 domain maps to 45-145 (NGNCGFGKLT…VKVPCRVSGN (101 aa)). 2 cysteine pairs are disulfide-bonded: Cys48-Cys78 and Cys81-Cys140. N-linked (GlcNAc...) asparagine glycosylation is present at Asn89.

The protein belongs to the expansin family. Expansin A subfamily.

It is found in the secreted. In terms of biological role, may serve to lubricate the movement of the cellulose microfibrils during cell growth and wall extension and/or may serve to maintain the fluid state of the slug cell wall. In Dictyostelium discoideum (Social amoeba), this protein is Expansin-like protein 5 (expl5).